Reading from the N-terminus, the 308-residue chain is Testis-specific Y-encoded protein 8 (308 aa).

This sequence belongs to the nucleosome assembly protein (NAP) family.

Its subcellular location is the cytoplasm. The protein resides in the nucleus. In terms of biological role, may be involved in sperm differentiation and proliferation. In Homo sapiens (Human), this protein is Testis-specific Y-encoded protein 8 (TSPY8).